The following is a 503-amino-acid chain: Probable cytosol aminopeptidase (503 aa).

Mn(2+)-binding residues include Lys270 and Asp275. The active site involves Lys282. Residues Asp293, Asp352, and Glu354 each contribute to the Mn(2+) site. Arg356 is an active-site residue.

The protein belongs to the peptidase M17 family. It depends on Mn(2+) as a cofactor.

Its subcellular location is the cytoplasm. It carries out the reaction Release of an N-terminal amino acid, Xaa-|-Yaa-, in which Xaa is preferably Leu, but may be other amino acids including Pro although not Arg or Lys, and Yaa may be Pro. Amino acid amides and methyl esters are also readily hydrolyzed, but rates on arylamides are exceedingly low.. The enzyme catalyses Release of an N-terminal amino acid, preferentially leucine, but not glutamic or aspartic acids.. Its function is as follows. Presumably involved in the processing and regular turnover of intracellular proteins. Catalyzes the removal of unsubstituted N-terminal amino acids from various peptides. This Klebsiella pneumoniae (strain 342) protein is Probable cytosol aminopeptidase.